We begin with the raw amino-acid sequence, 261 residues long: Ribosomal RNA small subunit methyltransferase A (261 aa).

6 residues coordinate S-adenosyl-L-methionine: asparagine 15, isoleucine 17, glycine 42, glutamate 64, aspartate 90, and asparagine 109.

This sequence belongs to the class I-like SAM-binding methyltransferase superfamily. rRNA adenine N(6)-methyltransferase family. RsmA subfamily.

It is found in the cytoplasm. It catalyses the reaction adenosine(1518)/adenosine(1519) in 16S rRNA + 4 S-adenosyl-L-methionine = N(6)-dimethyladenosine(1518)/N(6)-dimethyladenosine(1519) in 16S rRNA + 4 S-adenosyl-L-homocysteine + 4 H(+). In terms of biological role, specifically dimethylates two adjacent adenosines (A1518 and A1519) in the loop of a conserved hairpin near the 3'-end of 16S rRNA in the 30S particle. May play a critical role in biogenesis of 30S subunits. In Wolbachia sp. subsp. Brugia malayi (strain TRS), this protein is Ribosomal RNA small subunit methyltransferase A.